The chain runs to 179 residues: Large ribosomal subunit protein uL5 (179 aa).

It belongs to the universal ribosomal protein uL5 family. As to quaternary structure, part of the 50S ribosomal subunit; part of the 5S rRNA/L5/L18/L25 subcomplex. Contacts the 5S rRNA and the P site tRNA. Forms a bridge to the 30S subunit in the 70S ribosome.

Its function is as follows. This is one of the proteins that bind and probably mediate the attachment of the 5S RNA into the large ribosomal subunit, where it forms part of the central protuberance. In the 70S ribosome it contacts protein S13 of the 30S subunit (bridge B1b), connecting the 2 subunits; this bridge is implicated in subunit movement. Contacts the P site tRNA; the 5S rRNA and some of its associated proteins might help stabilize positioning of ribosome-bound tRNAs. This chain is Large ribosomal subunit protein uL5, found in Yersinia pestis.